We begin with the raw amino-acid sequence, 326 residues long: Beta-ketoacyl-[acyl-carrier-protein] synthase III (326 aa).

Catalysis depends on residues C120 and H253. Residues 254-258 (QANIR) are ACP-binding. The active site involves N283.

This sequence belongs to the thiolase-like superfamily. FabH family. Homodimer.

The protein resides in the cytoplasm. The catalysed reaction is malonyl-[ACP] + acetyl-CoA + H(+) = 3-oxobutanoyl-[ACP] + CO2 + CoA. It participates in lipid metabolism; fatty acid biosynthesis. In terms of biological role, catalyzes the condensation reaction of fatty acid synthesis by the addition to an acyl acceptor of two carbons from malonyl-ACP. Catalyzes the first condensation reaction which initiates fatty acid synthesis and may therefore play a role in governing the total rate of fatty acid production. Possesses both acetoacetyl-ACP synthase and acetyl transacylase activities. Its substrate specificity determines the biosynthesis of branched-chain and/or straight-chain of fatty acids. This chain is Beta-ketoacyl-[acyl-carrier-protein] synthase III, found in Cupriavidus taiwanensis (strain DSM 17343 / BCRC 17206 / CCUG 44338 / CIP 107171 / LMG 19424 / R1) (Ralstonia taiwanensis (strain LMG 19424)).